The primary structure comprises 327 residues: Aspartate--ammonia ligase (327 aa).

It belongs to the class-II aminoacyl-tRNA synthetase family. AsnA subfamily.

It is found in the cytoplasm. The enzyme catalyses L-aspartate + NH4(+) + ATP = L-asparagine + AMP + diphosphate + H(+). Its pathway is amino-acid biosynthesis; L-asparagine biosynthesis; L-asparagine from L-aspartate (ammonia route): step 1/1. In Mycoplasmoides gallisepticum (strain R(low / passage 15 / clone 2)) (Mycoplasma gallisepticum), this protein is Aspartate--ammonia ligase.